The sequence spans 576 residues: Rho GTPase-activating protein gacP (576 aa).

The stretch at 123–189 forms a coiled coil; the sequence is LKSIIKTELK…RTNFERVGID (67 aa). The Rho-GAP domain maps to 277 to 462; sequence EDLSVLLNRE…TIIQNFDRIF (186 aa). The segment at 472 to 576 is disordered; that stretch reads VPDTYVPPPN…DEGDAVELSD (105 aa). The segment covering 482-500 has biased composition (low complexity); that stretch reads NTRNNSVNNFNNVQPSSFS. A compositionally biased stretch (polar residues) spans 501–513; that stretch reads ASTSRSINLNKST. Positions 514-530 are enriched in low complexity; the sequence is NNPNINDDNNNNNNINN. Positions 565–576 are enriched in acidic residues; sequence SFDEGDAVELSD.

The protein localises to the cytoplasm. Functionally, rho GTPase-activating protein involved in the signal transduction pathway. This is Rho GTPase-activating protein gacP (gacP) from Dictyostelium discoideum (Social amoeba).